Here is a 691-residue protein sequence, read N- to C-terminus: Zinc finger protein 770 (691 aa).

Lys11 is covalently cross-linked (Glycyl lysine isopeptide (Lys-Gly) (interchain with G-Cter in SUMO2)). 3 consecutive C2H2-type zinc fingers follow at residues 27–49 (YVCN…YLIH), 55–77 (FECD…QLTH), and 81–103 (FKCS…QQLH). Glycyl lysine isopeptide (Lys-Gly) (interchain with G-Cter in SUMO2) cross-links involve residues Lys112, Lys121, and Lys146. C2H2-type zinc fingers lie at residues 160 to 182 (HACT…VLIH), 188 to 210 (FKCV…QLTH), and 216 to 238 (FQCC…KQIH). Residues 258-277 (PLPNKLNANQGGFENGEIGE) are disordered. A Glycyl lysine isopeptide (Lys-Gly) (interchain with G-Cter in SUMO2) cross-link involves residue Lys262. The C2H2-type 7; degenerate zinc finger occupies 294–318 (FQCPKCEKCFESEQILNEHSCFAAR). Residues Lys420 and Lys437 each participate in a glycyl lysine isopeptide (Lys-Gly) (interchain with G-Cter in SUMO2) cross-link. C2H2-type zinc fingers lie at residues 475 to 497 (CPCD…YLIH), 503 to 525 (FGCN…EQTH), 625 to 647 (YRCS…YLIH), and 653 to 675 (FECS…QLTH). A Glycyl lysine isopeptide (Lys-Gly) (interchain with G-Cter in SUMO2) cross-link involves residue Lys683.

Belongs to the krueppel C2H2-type zinc-finger protein family.

Its subcellular location is the nucleus. In terms of biological role, may be involved in transcriptional regulation. The sequence is that of Zinc finger protein 770 (ZNF770) from Homo sapiens (Human).